A 217-amino-acid polypeptide reads, in one-letter code: Thiamine-phosphate synthase (217 aa).

4-amino-2-methyl-5-(diphosphooxymethyl)pyrimidine-binding positions include 42 to 46 and Asp-77; that span reads QFRDK. The Mg(2+) site is built by Asp-78 and Asp-97. Ser-117 serves as a coordination point for 4-amino-2-methyl-5-(diphosphooxymethyl)pyrimidine. Position 144-146 (144-146) interacts with 2-[(2R,5Z)-2-carboxy-4-methylthiazol-5(2H)-ylidene]ethyl phosphate; the sequence is TIS. Residue Lys-147 coordinates 4-amino-2-methyl-5-(diphosphooxymethyl)pyrimidine. 2-[(2R,5Z)-2-carboxy-4-methylthiazol-5(2H)-ylidene]ethyl phosphate contacts are provided by residues Gly-175 and 195-196; that span reads IT.

The protein belongs to the thiamine-phosphate synthase family. Requires Mg(2+) as cofactor.

The enzyme catalyses 2-[(2R,5Z)-2-carboxy-4-methylthiazol-5(2H)-ylidene]ethyl phosphate + 4-amino-2-methyl-5-(diphosphooxymethyl)pyrimidine + 2 H(+) = thiamine phosphate + CO2 + diphosphate. It catalyses the reaction 2-(2-carboxy-4-methylthiazol-5-yl)ethyl phosphate + 4-amino-2-methyl-5-(diphosphooxymethyl)pyrimidine + 2 H(+) = thiamine phosphate + CO2 + diphosphate. The catalysed reaction is 4-methyl-5-(2-phosphooxyethyl)-thiazole + 4-amino-2-methyl-5-(diphosphooxymethyl)pyrimidine + H(+) = thiamine phosphate + diphosphate. The protein operates within cofactor biosynthesis; thiamine diphosphate biosynthesis; thiamine phosphate from 4-amino-2-methyl-5-diphosphomethylpyrimidine and 4-methyl-5-(2-phosphoethyl)-thiazole: step 1/1. Its function is as follows. Condenses 4-methyl-5-(beta-hydroxyethyl)thiazole monophosphate (THZ-P) and 2-methyl-4-amino-5-hydroxymethyl pyrimidine pyrophosphate (HMP-PP) to form thiamine monophosphate (TMP). The polypeptide is Thiamine-phosphate synthase (Levilactobacillus brevis (strain ATCC 367 / BCRC 12310 / CIP 105137 / JCM 1170 / LMG 11437 / NCIMB 947 / NCTC 947) (Lactobacillus brevis)).